Reading from the N-terminus, the 206-residue chain is GTP-binding protein YPT1 (206 aa).

Met-1 is modified (N-acetylmethionine). Residues 17–23, 33–40, Gly-66, and 121–124 each bind GTP; these read SGVGKSC, YTNDYIST, and NKCD. Residue Cys-23 is the site of S-palmitoyl cysteine attachment. The short motif at 37 to 45 is the Effector region element; it reads YISTIGVDF. Residues 63–80 are interaction with GDI1; that stretch reads DTAGQERFRTITSSYYRG. Cys-123 is lipidated: S-palmitoyl cysteine. Lys-144 participates in a covalent cross-link: Glycyl lysine isopeptide (Lys-Gly) (interchain with G-Cter in ubiquitin). 152–153 contributes to the GTP binding site; that stretch reads AL. Residues Ser-172 and Ser-174 each carry the phosphoserine modification. Residues 173-206 form a disordered region; that stretch reads MSQQNLNETTQKKEDKGNVNLKGQSLTNTGGGCC. Positions 189 to 195 are interaction with GDI1; it reads GNVNLKG. S-geranylgeranyl cysteine attachment occurs at residues Cys-205 and Cys-206.

The protein belongs to the small GTPase superfamily. Rab family. Forms a complex with the Rab escort protein (REP) MRS6, which is recognized by Rab geranylgeranyltransferase BET2-BET4. Interacts with the Rab GDP dissociation inhibitor GDI1, which can retrieve from and deliver to membranes the GDP-bound and prenylated form of YPT1. Interacts with YIP1, which is required for proper membrane targeting of prenylated YPT1. Interacts with YIF1, YIP3, YIP4 and YIP5. Prenylation is required for interaction with GDI1 and YIP1.

Its subcellular location is the endoplasmic reticulum membrane. The protein resides in the golgi apparatus membrane. It localises to the cytoplasm. The protein localises to the preautophagosomal structure membrane. Rab activation is generally mediated by a guanine exchange factor (GEF), while inactivation through hydrolysis of bound GTP is catalyzed by a GTPase activating protein (GAP). YPT1 is activated by the GEFs DSS4 and TRAPP complex, and inactivated by GAPs GYP1, GYP5 and GYP8. In terms of biological role, the small GTPases Rab are key regulators of intracellular membrane trafficking, from the formation of transport vesicles to their fusion with membranes. Rabs cycle between an inactive GDP-bound form and an active GTP-bound form that is able to recruit to membranes different set of downstream effectors directly responsible for vesicle formation, movement, tethering and fusion. YPT1 regulates the trafficking of secretory vesicles from the endoplasmic reticulum (ER) to the Golgi. Vesicular transport depends on shuttling of YPT1 between membrane and cytosol by GDI1, probably by recycling it to its membrane of origin after a vesicle fusion event. Plays a role in the initial events of the autophagic vacuole development which take place at specialized regions of the endoplasmic reticulum. Also involved in the recycling of membrane proteins. In Saccharomyces cerevisiae (strain ATCC 204508 / S288c) (Baker's yeast), this protein is GTP-binding protein YPT1 (YPT1).